Here is a 372-residue protein sequence, read N- to C-terminus: 3-isopropylmalate dehydrogenase (372 aa).

Residue Gly79–Glu90 participates in NAD(+) binding. Arg97, Arg107, Arg136, and Asp225 together coordinate substrate. The Mg(2+) site is built by Asp225, Asp250, and Asp254. An NAD(+)-binding site is contributed by Gly289–Asn300.

This sequence belongs to the isocitrate and isopropylmalate dehydrogenases family. Homodimer. Mg(2+) is required as a cofactor. Requires Mn(2+) as cofactor.

The protein localises to the cytoplasm. It catalyses the reaction (2R,3S)-3-isopropylmalate + NAD(+) = 4-methyl-2-oxopentanoate + CO2 + NADH. It participates in amino-acid biosynthesis; L-leucine biosynthesis; L-leucine from 3-methyl-2-oxobutanoate: step 3/4. Catalyzes the oxidation of 3-carboxy-2-hydroxy-4-methylpentanoate (3-isopropylmalate) to 3-carboxy-4-methyl-2-oxopentanoate. The product decarboxylates to 4-methyl-2 oxopentanoate. The protein is 3-isopropylmalate dehydrogenase (LEU2) of Eremothecium gossypii (strain ATCC 10895 / CBS 109.51 / FGSC 9923 / NRRL Y-1056) (Yeast).